The primary structure comprises 475 residues: Ubiquitin carboxyl-terminal hydrolase calypso (475 aa).

Residues 44 to 275 enclose the UCH catalytic domain; that stretch reads GWLELESDPG…IRFNLMAVVP (232 aa). The Nucleophile role is filled by cysteine 130. Histidine 212 serves as the catalytic Proton donor. Positions 333–360 form a coiled coil; the sequence is AKDLQLLLKNLDTEIAINEQNLADENDR. Residues 374–402 enclose the ULD domain; the sequence is NYDKFICTFLSMLAHQGVLGELVSQHLLP. A positively charged C-terminal tail required for binding nucleosomes region spans residues 404 to 475; sequence KKVSGQSAAN…KGRNKCRKRK (72 aa). The disordered stretch occupies residues 411 to 475; sequence AANRISKQNS…KGRNKCRKRK (65 aa). The span at 419 to 460 shows a compositional bias: low complexity; that stretch reads NSAASSAGANAGAAAGVTPKSQQQQQQPQTAASKNGKSPGKT. Residues 461 to 475 are compositionally biased toward basic residues; the sequence is PGRRRKGRNKCRKRK.

This sequence belongs to the peptidase C12 family. BAP1 subfamily. Catalytic component of the polycomb repressive deubiquitinase (PR-DUB) complex, at least composed of caly/calypso, Asx and sba (MBD5/6 homolog). The PR-DUB complex associates with nucleosomes to mediate deubiquitination of histone H2AK118ub1 substrates; the association requires the positively charged C-terminal tail of caly, probably due to direct binding of DNA. Interacts (via ULD domain) with Asx (via DEUBAD domain); the interaction produces a stable heterodimer with a composite binding site for ubiquitin. Homodimerizes (via coiled-coil hinge-region between the UCH and ULD domains) to mediate assembly of 2 copies of the caly-Asx heterodimer into a bisymmetric tetramer; dimerization enhances PR-DUB association with nucleosomes.

The protein resides in the nucleus. The enzyme catalyses Thiol-dependent hydrolysis of ester, thioester, amide, peptide and isopeptide bonds formed by the C-terminal Gly of ubiquitin (a 76-residue protein attached to proteins as an intracellular targeting signal).. Functionally, catalytic component of the polycomb repressive deubiquitinase (PR-DUB) complex, a complex that specifically mediates deubiquitination of histone H2A monoubiquitinated at 'Lys-119' (H2AK118ub1). Mediates bisymmetric organization of the PR-DUB complex and is involved in association with nucleosomes to mediate deubiquitination. Does not deubiquitinate monoubiquitinated histone H2B. Required to maintain the transcriptionally repressive state of homeotic genes throughout development. The PR-DUB complex has weak or no activity toward 'Lys-48'- and 'Lys-63'-linked polyubiquitin chains. Polycomb group (PcG) protein. The polypeptide is Ubiquitin carboxyl-terminal hydrolase calypso (Drosophila persimilis (Fruit fly)).